The following is a 321-amino-acid chain: Cytochrome c biogenesis protein CcsA (321 aa).

Transmembrane regions (helical) follow at residues 9 to 29 (ILTH…LMTL), 44 to 64 (GIIS…IYSG), 71 to 91 (LYES…IPYL), 98 to 118 (LSVI…SCLS), 143 to 163 (MLLS…LLVI), 225 to 245 (IISL…VWAN), 260 to 280 (WAFI…NINF), and 288 to 308 (VASI…LLGI).

The protein belongs to the CcmF/CycK/Ccl1/NrfE/CcsA family. As to quaternary structure, may interact with Ccs1.

The protein resides in the plastid. It localises to the chloroplast thylakoid membrane. In terms of biological role, required during biogenesis of c-type cytochromes (cytochrome c6 and cytochrome f) at the step of heme attachment. The sequence is that of Cytochrome c biogenesis protein CcsA from Dioscorea elephantipes (Elephant's foot yam).